We begin with the raw amino-acid sequence, 429 residues long: MFS-type efflux pump MSMEG_3705 (429 aa).

The next 12 membrane-spanning stretches (helical) occupy residues Ala-21–Leu-41, Ala-59–Val-79, Gly-86–Gly-106, Leu-115–Val-137, Leu-150–Leu-170, Phe-181–Val-201, Phe-228–Phe-248, Val-264–Gly-284, Leu-299–Val-319, Leu-327–Ile-347, Ala-361–Leu-381, and Ala-397–Ser-417.

This sequence belongs to the major facilitator superfamily.

The protein resides in the cell inner membrane. Its function is as follows. Probably plays a role in bacterial growth and resistance to antibiotics. This is MFS-type efflux pump MSMEG_3705 from Mycolicibacterium smegmatis (strain ATCC 700084 / mc(2)155) (Mycobacterium smegmatis).